Here is a 256-residue protein sequence, read N- to C-terminus: Probable serine/threonine-protein kinase YbdM (256 aa).

Residues 25–256 (YKIEECLGMG…DLNRAIQSVT (232 aa)) form the Protein kinase domain. Residues 31 to 39 (LGMGGYGLV) and Lys-54 each bind ATP. Asp-149 functions as the Proton acceptor in the catalytic mechanism.

The protein belongs to the protein kinase superfamily. Ser/Thr protein kinase family.

The enzyme catalyses L-seryl-[protein] + ATP = O-phospho-L-seryl-[protein] + ADP + H(+). It carries out the reaction L-threonyl-[protein] + ATP = O-phospho-L-threonyl-[protein] + ADP + H(+). The chain is Probable serine/threonine-protein kinase YbdM (ybdM) from Bacillus subtilis (strain 168).